We begin with the raw amino-acid sequence, 337 residues long: Protein BIG GRAIN 1-like (337 aa).

Disordered stretches follow at residues Met-1–Ser-32, Ser-120–Ser-163, and Lys-179–Ser-233. The segment covering His-137–Ala-146 has biased composition (basic and acidic residues). Composition is skewed to low complexity over residues Pro-150–Ser-163, Pro-195–Ala-209, and Arg-219–Ala-230.

Belongs to the BIG GRAIN 1 (BG1) plant protein family.

Its subcellular location is the cell membrane. In terms of biological role, involved in auxin transport. Regulator of the auxin signaling pathway. This chain is Protein BIG GRAIN 1-like, found in Oryza sativa subsp. indica (Rice).